Reading from the N-terminus, the 298-residue chain is Small ribosomal subunit protein uS3 (298 aa).

The region spanning 38–106 (IRRRLSRGME…QVQLNILEVK (69 aa)) is the KH type-2 domain. The tract at residues 212 to 298 (KQKQQESEVR…EPRADEKTEG (87 aa)) is disordered. Over residues 214-237 (KQQESEVRPPRGERGERGGRPERG) the composition is skewed to basic and acidic residues. The segment covering 265 to 278 (GSAQSPEQAQTSGD) has biased composition (polar residues).

The protein belongs to the universal ribosomal protein uS3 family. In terms of assembly, part of the 30S ribosomal subunit. Forms a tight complex with proteins S10 and S14.

Binds the lower part of the 30S subunit head. Binds mRNA in the 70S ribosome, positioning it for translation. The polypeptide is Small ribosomal subunit protein uS3 (Saccharopolyspora erythraea (strain ATCC 11635 / DSM 40517 / JCM 4748 / NBRC 13426 / NCIMB 8594 / NRRL 2338)).